Reading from the N-terminus, the 312-residue chain is Chorismate mutase 1, chloroplastic (312 aa).

The N-terminal 44 residues, 1-44, are a transit peptide targeting the chloroplast; the sequence is MAFKLATKAAAASPAAAHRGGLARGPEGTSRVAFGPAPRNKGLR. The tract at residues 16 to 58 is disordered; the sequence is AAHRGGLARGPEGTSRVAFGPAPRNKGLRAANNSATPVAKEER. L-phenylalanine is bound by residues Arg-58 and 190–193; that span reads NAGS. Residues Arg-58 and 190-193 each bind L-tyrosine; that span reads NAGS. The 255-residue stretch at 58 to 312 folds into the Chorismate mutase domain; the sequence is RVDRSEILTL…QIAYLLRRLD (255 aa).

As to quaternary structure, homodimer. Interacts with Cmu1 of the fungal pathogen Ustilago maydis.

It localises to the plastid. It is found in the chloroplast. It catalyses the reaction chorismate = prephenate. The protein operates within metabolic intermediate biosynthesis; prephenate biosynthesis; prephenate from chorismate: step 1/1. With respect to regulation, allosterically inhibited by tyrosine and phenylalanine. Activated by tryptophan. Its function is as follows. May play a role in chloroplast biogenesis. This chain is Chorismate mutase 1, chloroplastic, found in Zea mays (Maize).